The following is a 355-amino-acid chain: UDP-N-acetylglucosamine--N-acetylmuramyl-(pentapeptide) pyrophosphoryl-undecaprenol N-acetylglucosamine transferase (355 aa).

Residues 14–16, Asn-126, Arg-162, Ser-190, Ile-245, 264–269, and Gln-289 each bind UDP-N-acetyl-alpha-D-glucosamine; these read TGG and ALTVCE.

This sequence belongs to the glycosyltransferase 28 family. MurG subfamily.

Its subcellular location is the cell inner membrane. It carries out the reaction di-trans,octa-cis-undecaprenyl diphospho-N-acetyl-alpha-D-muramoyl-L-alanyl-D-glutamyl-meso-2,6-diaminopimeloyl-D-alanyl-D-alanine + UDP-N-acetyl-alpha-D-glucosamine = di-trans,octa-cis-undecaprenyl diphospho-[N-acetyl-alpha-D-glucosaminyl-(1-&gt;4)]-N-acetyl-alpha-D-muramoyl-L-alanyl-D-glutamyl-meso-2,6-diaminopimeloyl-D-alanyl-D-alanine + UDP + H(+). It participates in cell wall biogenesis; peptidoglycan biosynthesis. Functionally, cell wall formation. Catalyzes the transfer of a GlcNAc subunit on undecaprenyl-pyrophosphoryl-MurNAc-pentapeptide (lipid intermediate I) to form undecaprenyl-pyrophosphoryl-MurNAc-(pentapeptide)GlcNAc (lipid intermediate II). This chain is UDP-N-acetylglucosamine--N-acetylmuramyl-(pentapeptide) pyrophosphoryl-undecaprenol N-acetylglucosamine transferase, found in Mannheimia succiniciproducens (strain KCTC 0769BP / MBEL55E).